Consider the following 308-residue polypeptide: B- and T-lymphocyte attenuator (308 aa).

The first 29 residues, methionine 1 to cysteine 29, serve as a signal peptide directing secretion. At lysine 30 to tyrosine 183 the chain is on the extracellular side. Positions proline 32–asparagine 134 constitute an Ig-like V-type domain. 3 disulfides stabilise this stretch: cysteine 40-cysteine 69, cysteine 64-cysteine 124, and cysteine 78-cysteine 85. 5 N-linked (GlcNAc...) asparagine glycosylation sites follow: asparagine 49, asparagine 74, asparagine 81, asparagine 148, and asparagine 165. Residues alanine 184–leucine 204 form a helical membrane-spanning segment. The Cytoplasmic segment spans residues arginine 205–serine 308.

In terms of assembly, interacts with tyrosine phosphatases PTPN6/SHP-1 and PTPN11/SHP-2. Interacts with TNFRSF14/HVEM (via cysteine-rich domain 1). Post-translationally, phosphorylated on Tyr residues by TNFRSF14 and by antigen receptors cross-linking, both inducing association with PTPN6 and PTPN11. N-glycosylated.

It localises to the cell membrane. Its function is as follows. Inhibitory receptor on lymphocytes that negatively regulates antigen receptor signaling via PTPN6/SHP-1 and PTPN11/SHP-2. May interact in cis (on the same cell) or in trans (on other cells) with TNFRSF14. In cis interactions, appears to play an immune regulatory role inhibiting in trans interactions in naive T cells to maintain a resting state. In trans interactions, can predominate during adaptive immune response to provide survival signals to effector T cells. This chain is B- and T-lymphocyte attenuator, found in Rattus norvegicus (Rat).